The primary structure comprises 400 residues: Acetate kinase (400 aa).

Asparagine 7 is a Mg(2+) binding site. Lysine 14 is a binding site for ATP. Arginine 92 is a binding site for substrate. Aspartate 149 serves as the catalytic Proton donor/acceptor. Residues 209 to 213 (HLGNG), 283 to 285 (DAR), and 331 to 335 (GMGEN) contribute to the ATP site. Glutamate 385 contacts Mg(2+).

Belongs to the acetokinase family. In terms of assembly, homodimer. The cofactor is Mg(2+). Requires Mn(2+) as cofactor.

Its subcellular location is the cytoplasm. The enzyme catalyses acetate + ATP = acetyl phosphate + ADP. It functions in the pathway metabolic intermediate biosynthesis; acetyl-CoA biosynthesis; acetyl-CoA from acetate: step 1/2. In terms of biological role, catalyzes the formation of acetyl phosphate from acetate and ATP. Can also catalyze the reverse reaction. The protein is Acetate kinase of Helicobacter acinonychis (strain Sheeba).